The chain runs to 256 residues: Triosephosphate isomerase (256 aa).

Position 10–12 (10–12 (NWK)) interacts with substrate. His99 acts as the Electrophile in catalysis. Glu171 serves as the catalytic Proton acceptor. Substrate-binding positions include Gly177, Ser216, and 237–238 (GG).

Belongs to the triosephosphate isomerase family. Homodimer.

Its subcellular location is the cytoplasm. It catalyses the reaction D-glyceraldehyde 3-phosphate = dihydroxyacetone phosphate. The protein operates within carbohydrate biosynthesis; gluconeogenesis. It participates in carbohydrate degradation; glycolysis; D-glyceraldehyde 3-phosphate from glycerone phosphate: step 1/1. Involved in the gluconeogenesis. Catalyzes stereospecifically the conversion of dihydroxyacetone phosphate (DHAP) to D-glyceraldehyde-3-phosphate (G3P). The protein is Triosephosphate isomerase of Colwellia psychrerythraea (strain 34H / ATCC BAA-681) (Vibrio psychroerythus).